The sequence spans 304 residues: Recombination-associated protein RdgC (304 aa).

This sequence belongs to the RdgC family.

Its subcellular location is the cytoplasm. The protein resides in the nucleoid. May be involved in recombination. The sequence is that of Recombination-associated protein RdgC from Shewanella sp. (strain ANA-3).